Consider the following 943-residue polypeptide: Synaptotagmin-like protein 2 (943 aa).

The 57-residue stretch at 1 to 57 folds into the RabBD domain; the sequence is MIDLSFLTEEEQEAIMKVLQRDAALKRAEEERVRHLPEKVKDDQQLKNMSGQWFYEA. Disordered stretches follow at residues 77-99, 118-291, and 361-613; these read RKKR…KESW, EEPE…VRFH, and ESDR…SNSG. Basic and acidic residues predominate over residues 82–99; the sequence is QVADEQSKDRANRAKESW. The span at 125–138 shows a compositional bias: low complexity; the sequence is APASPSSSVVNPVS. Over residues 174 to 192 the composition is skewed to polar residues; the sequence is SQQTKNEQSKNGKTGLFQT. Residues 194-205 are compositionally biased toward basic and acidic residues; that stretch reads KEGELSESKEES. 3 stretches are compositionally biased toward polar residues: residues 382-394, 404-416, and 426-440; these read PQPS…LPFQ, KNET…SGSF, and EFLT…NSHT. Over residues 524 to 537 the composition is skewed to basic and acidic residues; sequence ELVRSAEDDQKADQ. Polar residues predominate over residues 549-560; sequence STVSSQPDNQFS. The segment covering 603–613 has biased composition (low complexity); it reads SSLTNLSSNSG. C2 domains follow at residues 637 to 762 and 777 to 906; these read VKGS…LKWY and NRGE…VDWM.

In terms of assembly, monomer. Binds NRXN1. Binds RAB27A that has been activated by GTP-binding via its N-terminus. Interacts with RAB27B.

It localises to the cell membrane. Functionally, may act as a RAB27A effector protein and play a role in cytotoxic granule exocytosis in lymphocytes. This Bos taurus (Bovine) protein is Synaptotagmin-like protein 2 (SYTL2).